Consider the following 301-residue polypeptide: Ribonuclease H2 subunit A (301 aa).

An N-acetylmethionine modification is found at M1. Residues 28 to 251 form the RNase H type-2 domain; it reads PCVLGVDEAG…AQAILEKEAE (224 aa). A divalent metal cation contacts are provided by D34, E35, and D142. Phosphothreonine is present on T217. A compositionally biased stretch (acidic residues) spans 255–264; it reads WEDSEAEEDP. The interval 255–284 is disordered; it reads WEDSEAEEDPERPGKITSYFSQGPQTCRPQ. S258 carries the phosphoserine modification. Over residues 272 to 282 the composition is skewed to polar residues; the sequence is SYFSQGPQTCR.

This sequence belongs to the RNase HII family. Eukaryotic subfamily. The RNase H2 complex is a heterotrimer composed of the catalytic subunit RNASEH2A and the non-catalytic subunits RNASEH2B and RNASEH2C. Mn(2+) is required as a cofactor. Requires Mg(2+) as cofactor.

It localises to the nucleus. The enzyme catalyses Endonucleolytic cleavage to 5'-phosphomonoester.. Its function is as follows. Catalytic subunit of RNase HII, an endonuclease that specifically degrades the RNA of RNA:DNA hybrids. Participates in DNA replication, possibly by mediating the removal of lagging-strand Okazaki fragment RNA primers during DNA replication. Mediates the excision of single ribonucleotides from DNA:RNA duplexes. This is Ribonuclease H2 subunit A (Rnaseh2a) from Mus musculus (Mouse).